The following is a 297-amino-acid chain: Giardin subunit alpha-6 (297 aa).

Annexin repeat units follow at residues 3-72, 74-146, 153-222, and 226-295; these read TTVQ…AYLW, KPGD…HWIL, FDID…AAHY, and HPAR…ILWR.

This sequence belongs to the annexin family. Giardin subunit alpha subfamily.

Its subcellular location is the cytoplasm. The protein localises to the cytoskeleton. Functionally, giardins are involved in parasite attachment to the intestinal mucosa and in the cytoskeletal disassembly and reassembly that marks the transition from infectious trophozoite to transmissible cyst. They may interact with other cytoskeletal proteins such as microtubules in the microribbons or crossbridges, to maintain the integrity of the ventral disk. In Giardia intestinalis (Giardia lamblia), this protein is Giardin subunit alpha-6.